Here is a 541-residue protein sequence, read N- to C-terminus: uncharacterized protein (541 aa).

An N-terminal signal peptide occupies residues 1 to 22; that stretch reads MQFKYGALIFSGFLGLSIVLAS. Residue C23 is the site of N-palmitoyl cysteine attachment. C23 carries the S-diacylglycerol cysteine lipid modification. 2 disordered regions span residues 446–468 and 480–514; these read APGQSSQKEGGQQQSNSKDNGNL and KTKTEVKKTEDTQNQGKKAEGTPNQGKKAEGTENQ. Positions 448–460 are enriched in low complexity; the sequence is GQSSQKEGGQQQS. A compositionally biased stretch (basic and acidic residues) spans 480-490; it reads KTKTEVKKTED.

Belongs to the MG185/MG260 family.

The protein localises to the cell membrane. This is an uncharacterized protein from Mycoplasma pneumoniae (strain ATCC 29342 / M129 / Subtype 1) (Mycoplasmoides pneumoniae).